The following is a 156-amino-acid chain: Small ribosomal subunit protein uS7c (156 aa).

The protein belongs to the universal ribosomal protein uS7 family. Part of the 30S ribosomal subunit.

Its subcellular location is the plastid. The protein localises to the chloroplast. In terms of biological role, one of the primary rRNA binding proteins, it binds directly to 16S rRNA where it nucleates assembly of the head domain of the 30S subunit. The protein is Small ribosomal subunit protein uS7c (rps7) of Ostreococcus tauri.